A 421-amino-acid polypeptide reads, in one-letter code: AA11 family lytic polysaccharide monooxygenase (421 aa).

An N-terminal signal peptide occupies residues 1–19; it reads MFSKAFLSAALLGAAAVEG. Cu(+) is bound by residues histidine 20, histidine 79, and glutamate 93. Disulfide bonds link cysteine 48/cysteine 162, cysteine 84/cysteine 110, and cysteine 201/cysteine 235. N-linked (GlcNAc...) asparagine glycosylation occurs at asparagine 117. The disordered stretch occupies residues 231 to 349; it reads GSQACTGTPT…SSSSSSSGAL (119 aa). A compositionally biased stretch (low complexity) spans 247 to 285; it reads TAGSSGSSGSSSGSSSGGSSSSAAGSGATAPPAPAVSST. Over residues 304-314 the composition is skewed to polar residues; sequence SPAQPTHTSAP. The span at 315–349 shows a compositional bias: low complexity; the sequence is SGGSSSGSGSSSGSNSGSSSGSSSSSSSSSSSGAL.

This sequence belongs to the polysaccharide monooxygenase AA11 family. Requires Cu(2+) as cofactor.

Its function is as follows. Lytic polysaccharide monooxygenase (LPMO) that depolymerizes chitin via the oxidation of scissile beta-(1-4)-glycosidic bonds, yielding C1 or C4 oxidation products. Catalysis by LPMOs requires the reduction of the active-site copper from Cu(II) to Cu(I) by a reducing agent and H(2)O(2) or O(2) as a cosubstrate. Active on chitin but has no activity on other substrates, including diverse mannans, cellulose and starch (data not shown). Primary chain cleavage yields predominantly aldonic acid oligosaccharides with even-numbered degrees of polymerization. This Aspergillus oryzae (strain ATCC 42149 / RIB 40) (Yellow koji mold) protein is AA11 family lytic polysaccharide monooxygenase.